Here is a 99-residue protein sequence, read N- to C-terminus: Cell division protein FtsB (99 aa).

The Cytoplasmic portion of the chain corresponds to 1–3; it reads MKF. Residues 4–21 traverse the membrane as a helical segment; the sequence is FVIALIVLLGLLQYRLWS. Residues 22-99 lie on the Periplasmic side of the membrane; it reads GDNSLPEYFV…GDRSVSSPSQ (78 aa). The stretch at 31 to 73 forms a coiled coil; the sequence is VLQKQIAAQQDGNAKLNERNQVLKEEIIDLKSGTEAIEERARN.

Belongs to the FtsB family. Part of a complex composed of FtsB, FtsL and FtsQ.

The protein resides in the cell inner membrane. Its function is as follows. Essential cell division protein. May link together the upstream cell division proteins, which are predominantly cytoplasmic, with the downstream cell division proteins, which are predominantly periplasmic. This chain is Cell division protein FtsB, found in Shewanella sp. (strain MR-4).